The following is a 387-amino-acid chain: 1-deoxy-D-xylulose 5-phosphate reductoisomerase (387 aa).

5 residues coordinate NADPH: T10, G11, S12, I13, and N124. K125 is a 1-deoxy-D-xylulose 5-phosphate binding site. E126 provides a ligand contact to NADPH. A Mn(2+)-binding site is contributed by D150. The 1-deoxy-D-xylulose 5-phosphate site is built by S151, E152, S176, and H199. Residue E152 coordinates Mn(2+). NADPH is bound at residue G205. The 1-deoxy-D-xylulose 5-phosphate site is built by S212, N217, K218, and E221. E221 is a Mn(2+) binding site.

It belongs to the DXR family. It depends on Mg(2+) as a cofactor. The cofactor is Mn(2+).

It catalyses the reaction 2-C-methyl-D-erythritol 4-phosphate + NADP(+) = 1-deoxy-D-xylulose 5-phosphate + NADPH + H(+). It functions in the pathway isoprenoid biosynthesis; isopentenyl diphosphate biosynthesis via DXP pathway; isopentenyl diphosphate from 1-deoxy-D-xylulose 5-phosphate: step 1/6. Catalyzes the NADPH-dependent rearrangement and reduction of 1-deoxy-D-xylulose-5-phosphate (DXP) to 2-C-methyl-D-erythritol 4-phosphate (MEP). This chain is 1-deoxy-D-xylulose 5-phosphate reductoisomerase, found in Clostridium beijerinckii (strain ATCC 51743 / NCIMB 8052) (Clostridium acetobutylicum).